Consider the following 192-residue polypeptide: Beta-glucosidase (192 aa).

It belongs to the glycosyl hydrolase 3 family.

The catalysed reaction is Hydrolysis of terminal, non-reducing beta-D-glucosyl residues with release of beta-D-glucose.. It participates in glycan metabolism; cellulose degradation. This Schizophyllum commune (Split gill fungus) protein is Beta-glucosidase.